Consider the following 604-residue polypeptide: Netrin-1 (604 aa).

The N-terminal stretch at 1 to 24 (MMRAVWEALAALAAVACLVGAVRG) is a signal peptide. The 238-residue stretch at 47–284 (HPRRCIPDFV…AVSDLQVGGR (238 aa)) folds into the Laminin N-terminal domain. Asn95, Asn116, and Asn131 each carry an N-linked (GlcNAc...) asparagine glycan. Cystine bridges form between Cys119–Cys152, Cys285–Cys294, Cys287–Cys304, Cys306–Cys315, Cys318–Cys338, Cys341–Cys350, Cys343–Cys368, Cys371–Cys380, Cys383–Cys401, Cys404–Cys416, Cys406–Cys423, Cys425–Cys434, Cys437–Cys451, Cys472–Cys544, and Cys491–Cys601. Laminin EGF-like domains are found at residues 285–340 (CKCN…ECVA), 341–403 (CNCN…ACKA), and 404–453 (CDCH…PCIK). N-linked (GlcNAc...) asparagine glycosylation is present at Asn417. An NTR domain is found at 472–601 (CDSYCKASKG…FQQREKKGKC (130 aa)). Residues 530–532 (RGD) carry the Cell attachment site motif.

As to quaternary structure, binds to its receptors; DCC, UNC5A, UNC5B, UNC5C and probably UNC5D. Binds to its receptor; DSCAM. Interacts with DCC. Interacts with APP. In terms of tissue distribution, widely expressed in normal adult tissues with highest levels in heart, small intestine, colon, liver and prostate. Reduced expression in brain tumors and neuroblastomas. Expressed in epididymis (at protein level).

It is found in the secreted. Its subcellular location is the cytoplasm. Netrins control guidance of CNS commissural axons and peripheral motor axons. Its association with either DCC or some UNC5 receptors will lead to axon attraction or repulsion, respectively. Binding to UNC5C might cause dissociation of UNC5C from polymerized TUBB3 in microtubules and thereby lead to increased microtubule dynamics and axon repulsion. Involved in dorsal root ganglion axon projection towards the spinal cord. It also serves as a survival factor via its association with its receptors which prevent the initiation of apoptosis. Involved in tumorigenesis by regulating apoptosis. The protein is Netrin-1 (NTN1) of Homo sapiens (Human).